Consider the following 364-residue polypeptide: Chaperone protein DnaJ (364 aa).

Positions 5-71 constitute a J domain; sequence DYYEILGVAK…QKRQAYDQFG (67 aa). A CR-type zinc finger spans residues 127–205; sequence GSTVKIRIPK…CRGQGLVRKQ (79 aa). 8 residues coordinate Zn(2+): Cys-140, Cys-143, Cys-157, Cys-160, Cys-179, Cys-182, Cys-193, and Cys-196. CXXCXGXG motif repeat units lie at residues 140-147, 157-164, 179-186, and 193-200; these read CDTCSGIG, CSICSGVG, CGTCSGTG, and CGTCRGQG.

Belongs to the DnaJ family. In terms of assembly, homodimer. Zn(2+) is required as a cofactor.

It is found in the cytoplasm. Its function is as follows. Participates actively in the response to hyperosmotic and heat shock by preventing the aggregation of stress-denatured proteins and by disaggregating proteins, also in an autonomous, DnaK-independent fashion. Unfolded proteins bind initially to DnaJ; upon interaction with the DnaJ-bound protein, DnaK hydrolyzes its bound ATP, resulting in the formation of a stable complex. GrpE releases ADP from DnaK; ATP binding to DnaK triggers the release of the substrate protein, thus completing the reaction cycle. Several rounds of ATP-dependent interactions between DnaJ, DnaK and GrpE are required for fully efficient folding. Also involved, together with DnaK and GrpE, in the DNA replication of plasmids through activation of initiation proteins. This is Chaperone protein DnaJ from Ruthia magnifica subsp. Calyptogena magnifica.